Reading from the N-terminus, the 424-residue chain is Tyrosine--tRNA ligase (424 aa).

Y37 is a binding site for L-tyrosine. A 'HIGH' region motif is present at residues 42 to 51; that stretch reads PTADSLHLGH. K144 carries the N6-acetyllysine modification. Y175 and Q179 together coordinate L-tyrosine. The short motif at 235-239 is the 'KMSKS' region element; it reads KFGKT. ATP is bound at residue K238. One can recognise an S4 RNA-binding domain in the interval 357–414; sequence ADLMQALVDSELQPSRGQARKTIASNAITINGEKQSDPEYFFKEEDRLFGRFTLLRRG.

The protein belongs to the class-I aminoacyl-tRNA synthetase family. TyrS type 1 subfamily. In terms of assembly, homodimer.

The protein resides in the cytoplasm. It catalyses the reaction tRNA(Tyr) + L-tyrosine + ATP = L-tyrosyl-tRNA(Tyr) + AMP + diphosphate + H(+). In terms of biological role, catalyzes the attachment of tyrosine to tRNA(Tyr) in a two-step reaction: tyrosine is first activated by ATP to form Tyr-AMP and then transferred to the acceptor end of tRNA(Tyr). The chain is Tyrosine--tRNA ligase from Shigella boydii serotype 4 (strain Sb227).